A 201-amino-acid polypeptide reads, in one-letter code: Probable nicotinate-nucleotide adenylyltransferase (201 aa).

It belongs to the NadD family.

It catalyses the reaction nicotinate beta-D-ribonucleotide + ATP + H(+) = deamido-NAD(+) + diphosphate. It participates in cofactor biosynthesis; NAD(+) biosynthesis; deamido-NAD(+) from nicotinate D-ribonucleotide: step 1/1. In terms of biological role, catalyzes the reversible adenylation of nicotinate mononucleotide (NaMN) to nicotinic acid adenine dinucleotide (NaAD). The chain is Probable nicotinate-nucleotide adenylyltransferase from Carboxydothermus hydrogenoformans (strain ATCC BAA-161 / DSM 6008 / Z-2901).